A 248-amino-acid chain; its full sequence is Pyridoxine 5'-phosphate synthase (248 aa).

Asparagine 10 provides a ligand contact to 3-amino-2-oxopropyl phosphate. 12–13 provides a ligand contact to 1-deoxy-D-xylulose 5-phosphate; that stretch reads DH. Arginine 21 is a 3-amino-2-oxopropyl phosphate binding site. Residue histidine 46 is the Proton acceptor of the active site. 1-deoxy-D-xylulose 5-phosphate is bound by residues arginine 48 and histidine 53. Glutamate 73 serves as the catalytic Proton acceptor. Threonine 103 contacts 1-deoxy-D-xylulose 5-phosphate. Residue histidine 194 is the Proton donor of the active site. 3-amino-2-oxopropyl phosphate contacts are provided by residues glycine 195 and 216–217; that span reads GH.

Belongs to the PNP synthase family. As to quaternary structure, homooctamer; tetramer of dimers.

The protein resides in the cytoplasm. The enzyme catalyses 3-amino-2-oxopropyl phosphate + 1-deoxy-D-xylulose 5-phosphate = pyridoxine 5'-phosphate + phosphate + 2 H2O + H(+). The protein operates within cofactor biosynthesis; pyridoxine 5'-phosphate biosynthesis; pyridoxine 5'-phosphate from D-erythrose 4-phosphate: step 5/5. Functionally, catalyzes the complicated ring closure reaction between the two acyclic compounds 1-deoxy-D-xylulose-5-phosphate (DXP) and 3-amino-2-oxopropyl phosphate (1-amino-acetone-3-phosphate or AAP) to form pyridoxine 5'-phosphate (PNP) and inorganic phosphate. In Legionella pneumophila (strain Corby), this protein is Pyridoxine 5'-phosphate synthase.